The primary structure comprises 780 residues: MAPYRSSLLCALLLLALCALSPSHAATTSRGRAQERAPQSRVSEARPSTMVVEHPEFLKAGKEPGLQIWRVEKFDLVPVPPNLYGDFFTGDAYVILKTVQLRNGNLQYDLHYWLGNECSQDESGAAAIFTVQLDDYLNGRAVQHREVQGFESSTFSGYFKSGLKYKKGGVASGFKHVVPNEVVVQRLFQVKGRRVVRATEVPVSWDSFNNGDCFILDLGNNIYQWCGSGSNKFERLKATQVSKGIRDNERSGRAQVHVSEEGGEPEAMLQVLGPKPALPEGTEDTAKEDAANRRLAKLYKVSNGAGSMSVSLVADENPFAQGALRSEDCFILDHGRDGKIFVWKGKQANMEERKAALKTASDFISKMQYPRQTQVSVLPEGGETPLFKQFFKNWRDPDQTDGPGLGYLSSHIANVERVPFDAATLHTSTAMAAQHGMDDDGTGQKQIWRIEGSNKVPVDPATYGQFYGGDSYIILYNYRHGGRQGQIIYNWQGAQSTQDEVAASAILTAQLDEELGGTPVQSRVVQGKEPAHLMSLFGGKPMIIYKGGTSRDGGQTAPASIRLFQVRASSSGATRAVEVMPKSGALNSNDAFVLKTPSAAYLWVGAGASEAEKTGAQELLKVLRSQHVQVEEGSEPDAFWEALGGKTAYRTSPRLKDKKMDAHPPRLFACSNRIGRFVIEEVPGELMQEDLATDDVMLLDTWDQVFVWVGKDSQEEEKTEALTSAKRYIETDPANRDRRTPITVVRQGFEPPSFVGWFLGWDDNYWSVDPLDRALAELAA.

Met1 carries the post-translational modification N-acetylmethionine; alternate. A signal peptide spans 1–25 (MAPYRSSLLCALLLLALCALSPSHA). Residues 51–174 (VVEHPEFLKA…YKKGGVASGF (124 aa)) are actin-severing. One copy of the Gelsolin-like 1 repeat lies at 74-155 (FDLVPVPPNL…EVQGFESSTF (82 aa)). Tyr84 carries the post-translational modification Phosphotyrosine. 6 residues coordinate Ca(2+): Gly90, Asp91, Glu122, Asp134, Gly139, and Ala141. The segment at 121–124 (DESG) is actin-actin interfilament contact point. Residue 160 to 167 (KSGLKYKK) participates in a 1,2-diacyl-sn-glycero-3-phospho-(1D-myo-inositol-4,5-bisphosphate) binding. Val170 contacts Ca(2+). 186–194 (RLFQVKGRR) is an a 1,2-diacyl-sn-glycero-3-phospho-(1D-myo-inositol-4,5-bisphosphate) binding site. The stretch at 196 to 268 (VRATEVPVSW…SEEGGEPEAM (73 aa)) is one Gelsolin-like 2 repeat. Ca(2+)-binding residues include Gly211 and Asp212. Cys213 and Cys226 are oxidised to a cystine. Glu234 is a Ca(2+) binding site. Residues 244–269 (GIRDNERSGRAQVHVSEEGGEPEAML) are disordered. Ca(2+) contacts are provided by Asp284, Glu327, Asp328, and Glu352. Residues 315 to 387 (DENPFAQGAL…LPEGGETPLF (73 aa)) form a Gelsolin-like 3 repeat. Phosphotyrosine is present on residues Tyr407 and Tyr463. Residues 432–780 (AAQHGMDDDG…LDRALAELAA (349 aa)) are actin-binding, Ca-sensitive. The stretch at 453-534 (SNKVPVDPAT…VQGKEPAHLM (82 aa)) is one Gelsolin-like 4 repeat. Residues Gly469, Asp470, Glu500, Asp512, Gly517, Pro519, and Thr549 each contribute to the Ca(2+) site. A Gelsolin-like 5 repeat occupies 575 to 640 (RAVEVMPKSG…EEGSEPDAFW (66 aa)). Lys582 is subject to N6-acetyllysine. 2 residues coordinate Ca(2+): Asn589 and Asp590. Phosphotyrosine is present on Tyr601. Glu612 is a Ca(2+) binding site. Tyr649 carries the post-translational modification Phosphotyrosine. A Gelsolin-like 6 repeat occupies 679–754 (IEEVPGELMQ…VRQGFEPPSF (76 aa)). Asp694, Asp695, and Glu717 together coordinate Ca(2+). Thr740 carries the post-translational modification Phosphothreonine.

It belongs to the villin/gelsolin family. Binds to actin and to fibronectin. Identified in a complex composed of ACTA1, COBL, GSN and TMSB4X. Interacts with the inactive form of EIF2AK2/PKR. Interacts with FLII. Post-translationally, phosphorylated on tyrosine residues in vitro.

Its subcellular location is the cytoplasm. The protein resides in the cytoskeleton. It localises to the secreted. Calcium-regulated, actin-modulating protein that binds to the plus (or barbed) ends of actin monomers or filaments, preventing monomer exchange (end-blocking or capping). It can promote the assembly of monomers into filaments (nucleation) as well as sever filaments already formed. Plays a role in ciliogenesis. The polypeptide is Gelsolin (Gsn) (Mus musculus (Mouse)).